The following is a 381-amino-acid chain: E3 ubiquitin-protein ligase RNF13 (381 aa).

The signal sequence occupies residues 1–34 (MLLSIGMLMLSATQIYTIVTVQLFAFLNLLPVEA). The Lumenal segment spans residues 35-182 (DILAYNFENG…IPEFSLPLEY (148 aa)). In terms of domain architecture, PA spans 64–160 (LKGFLINSKP…GEASANSLKE (97 aa)). The N-linked (GlcNAc...) asparagine glycan is linked to asparagine 88. Residues 183–203 (YLIPFLIIVGICLILIVIFMI) traverse the membrane as a helical segment. Over 204-381 (TKFVQDRHRA…ERDYRVTNTV (178 aa)) the chain is Cytoplasmic. The RING-type; atypical zinc finger occupies 240–282 (CAICLDEYEDGDKLRILPCSHAYHCKCVDPWLTKTKKTCPVCK). The segment at 285–381 (VVPSQGDSDS…ERDYRVTNTV (97 aa)) is disordered. 2 stretches are compositionally biased toward acidic residues: residues 292-305 (SDSETDSSQEENEV) and 339-353 (SEYEEDDNDNIDSSD). Over residues 370–381 (NDERDYRVTNTV) the composition is skewed to basic and acidic residues.

As to expression, widely expressed (at protein level). Lowest levels in the liver, moderate levels in the heart, intestine and spleen, and high levels in skeletal muscle, kidney, proventriculus and brain. Also expressed in inner ear after noise exposure.

The protein localises to the endoplasmic reticulum membrane. It localises to the late endosome membrane. Its subcellular location is the lysosome membrane. It is found in the nucleus inner membrane. The catalysed reaction is S-ubiquitinyl-[E2 ubiquitin-conjugating enzyme]-L-cysteine + [acceptor protein]-L-lysine = [E2 ubiquitin-conjugating enzyme]-L-cysteine + N(6)-ubiquitinyl-[acceptor protein]-L-lysine.. It functions in the pathway protein modification; protein ubiquitination. Functionally, E3 ubiquitin-protein ligase that regulates cell proliferation. Involved in apoptosis regulation. Mediates ER stress-induced activation of JNK signaling pathway and apoptosis by promoting ERN1 activation and splicing of XBP1 mRNA. This Gallus gallus (Chicken) protein is E3 ubiquitin-protein ligase RNF13.